An 87-amino-acid polypeptide reads, in one-letter code: Cell division topological specificity factor (87 aa).

It belongs to the MinE family.

In terms of biological role, prevents the cell division inhibition by proteins MinC and MinD at internal division sites while permitting inhibition at polar sites. This ensures cell division at the proper site by restricting the formation of a division septum at the midpoint of the long axis of the cell. This is Cell division topological specificity factor from Vibrio vulnificus (strain CMCP6).